We begin with the raw amino-acid sequence, 229 residues long: NAD(P)H-hydrate epimerase (229 aa).

Positions 10-217 (AINVDLELFN…ALQRKYELNL (208 aa)) constitute a YjeF N-terminal domain. 60–64 (NNGGD) contacts (6S)-NADPHX. Asn61 and Asp125 together coordinate K(+). (6S)-NADPHX-binding positions include 129 to 135 (GFSFKPP) and Asp158. Residue Ser161 participates in K(+) binding.

This sequence belongs to the NnrE/AIBP family. K(+) serves as cofactor.

It carries out the reaction (6R)-NADHX = (6S)-NADHX. It catalyses the reaction (6R)-NADPHX = (6S)-NADPHX. In terms of biological role, catalyzes the epimerization of the S- and R-forms of NAD(P)HX, a damaged form of NAD(P)H that is a result of enzymatic or heat-dependent hydration. This is a prerequisite for the S-specific NAD(P)H-hydrate dehydratase to allow the repair of both epimers of NAD(P)HX. This is NAD(P)H-hydrate epimerase from Drosophila mojavensis (Fruit fly).